The sequence spans 216 residues: Probable nicotinate-nucleotide adenylyltransferase (216 aa).

The protein belongs to the NadD family.

It catalyses the reaction nicotinate beta-D-ribonucleotide + ATP + H(+) = deamido-NAD(+) + diphosphate. It functions in the pathway cofactor biosynthesis; NAD(+) biosynthesis; deamido-NAD(+) from nicotinate D-ribonucleotide: step 1/1. Its function is as follows. Catalyzes the reversible adenylation of nicotinate mononucleotide (NaMN) to nicotinic acid adenine dinucleotide (NaAD). This Geobacillus thermodenitrificans (strain NG80-2) protein is Probable nicotinate-nucleotide adenylyltransferase.